Here is a 426-residue protein sequence, read N- to C-terminus: D-tagatose-1,6-bisphosphate aldolase subunit KbaZ (426 aa).

It belongs to the GatZ/KbaZ family. KbaZ subfamily. Forms a complex with KbaY.

Its pathway is carbohydrate metabolism; D-tagatose 6-phosphate degradation; D-glyceraldehyde 3-phosphate and glycerone phosphate from D-tagatose 6-phosphate: step 2/2. Component of the tagatose-1,6-bisphosphate aldolase KbaYZ that is required for full activity and stability of the Y subunit. Could have a chaperone-like function for the proper and stable folding of KbaY. When expressed alone, KbaZ does not show any aldolase activity. This is D-tagatose-1,6-bisphosphate aldolase subunit KbaZ from Escherichia fergusonii (strain ATCC 35469 / DSM 13698 / CCUG 18766 / IAM 14443 / JCM 21226 / LMG 7866 / NBRC 102419 / NCTC 12128 / CDC 0568-73).